The following is a 1190-amino-acid chain: Wings apart-like protein homolog (1190 aa).

Disordered stretches follow at residues 1–23 (MTSR…FDEV) and 46–82 (QKRP…DESL). The interval 1-659 (MTSRFGKTYS…ENQEFTDDIE (659 aa)) is mediates interaction with the cohesin complex. Positions 54 to 66 (DIQEIPKKPKVEE) are enriched in basic and acidic residues. Residues 73–75 (FGF) carry the FGF motif 1 motif. Serine 77 is subject to Phosphoserine. Lysine 168 bears the N6-acetyllysine mark. Phosphoserine occurs at positions 221, 223, and 226. Residues 260–286 (LLEMKDDDFKNRLENLNEAIEEDIVQS) adopt a coiled-coil conformation. 2 positions are modified to phosphoserine: serine 347 and serine 380. Residues 429-431 (FGF) carry the FGF motif 2 motif. Serine 443 carries the phosphoserine modification. The FGF motif 3 signature appears at 453-455 (FGF). Phosphoserine is present on residues serine 459 and serine 461. The segment covering 459-469 (SESEDDEDDDC) has biased composition (acidic residues). The tract at residues 459 to 553 (SESEDDEDDD…SGPKRSPTKA (95 aa)) is disordered. Residues 494–509 (SNDNSQDSQSGTNNAE) show a composition bias toward polar residues. The span at 531–540 (QGDKSKENTR) shows a compositional bias: basic and acidic residues. Residues 626 to 1169 (RREDKELYTV…KKFLSFMNLT (544 aa)) enclose the WAPL domain. Positions 749–782 (ELEQDASSAKLLNEKDMNKIKEKIRRLCETVHNK) form a coiled coil. Residue serine 904 is modified to Phosphoserine.

The protein belongs to the WAPL family. In terms of assembly, interacts with the cohesin complex throughout the cell cycle; interacts with both chromatin-bound and soluble pools of the complex. Interacts with RAD21; the interaction is direct. Interacts with PDS5A; the interaction is direct, cohesin-dependent and competitive with CDCA5/SORORIN. Interacts (via FGF motifs) with PDS5B; the interaction is direct. Interacts with a SMC1 protein (SMC1A or SMC1B) and SMC3. (Microbial infection) Isoform 2 interacts with Epstein-Barr virus EBNA2. Post-translationally, deubiquitinated by USP37; leading to stabilization. Isoform 1 is highly expressed in uterine cervix tumor. Isoform 2 is widely expressed with a high level in skeletal muscle and heart.

The protein resides in the nucleus. It is found in the chromosome. The protein localises to the cytoplasm. Regulator of sister chromatid cohesion in mitosis which negatively regulates cohesin association with chromatin. Involved in both sister chromatid cohesion during interphase and sister-chromatid resolution during early stages of mitosis. Couples DNA replication to sister chromatid cohesion. Cohesion ensures that chromosome partitioning is accurate in both meiotic and mitotic cells and plays an important role in DNA repair. The protein is Wings apart-like protein homolog of Homo sapiens (Human).